Consider the following 154-residue polypeptide: Myoglobin (154 aa).

A Globin domain is found at 2–148 (GLSDGEWQLV…FRNDMAAKYK (147 aa)). S4 carries the phosphoserine modification. H65 is a nitrite binding site. H65 is an O2 binding site. T68 is modified (phosphothreonine). H94 contacts heme b.

It belongs to the globin family. Monomeric.

The protein resides in the cytoplasm. It is found in the sarcoplasm. The enzyme catalyses Fe(III)-heme b-[protein] + nitric oxide + H2O = Fe(II)-heme b-[protein] + nitrite + 2 H(+). It catalyses the reaction H2O2 + AH2 = A + 2 H2O. In terms of biological role, monomeric heme protein which primary function is to store oxygen and facilitate its diffusion within muscle tissues. Reversibly binds oxygen through a pentacoordinated heme iron and enables its timely and efficient release as needed during periods of heightened demand. Depending on the oxidative conditions of tissues and cells, and in addition to its ability to bind oxygen, it also has a nitrite reductase activity whereby it regulates the production of bioactive nitric oxide. Under stress conditions, like hypoxia and anoxia, it also protects cells against reactive oxygen species thanks to its pseudoperoxidase activity. The chain is Myoglobin (MB) from Macaca fascicularis (Crab-eating macaque).